The primary structure comprises 154 residues: MSTFVQKPAEVEKKWVIIDAEGLVVGRLATVIATYLRGKHKVTYTPHVDDGDNVIVINAEKVVLTGKKYTDKTYYWHTGYPGGIKERTARQIIEGRFPERVLEKAVERMIPRGPLGRRQMKNLRVYAGSAHPHEAQQPVALDVAKLNSKNVRSA.

The protein belongs to the universal ribosomal protein uL13 family. In terms of assembly, part of the 50S ribosomal subunit.

Functionally, this protein is one of the early assembly proteins of the 50S ribosomal subunit, although it is not seen to bind rRNA by itself. It is important during the early stages of 50S assembly. This is Large ribosomal subunit protein uL13 from Allorhizobium ampelinum (strain ATCC BAA-846 / DSM 112012 / S4) (Agrobacterium vitis (strain S4)).